We begin with the raw amino-acid sequence, 368 residues long: Flagellar P-ring protein (368 aa).

The N-terminal stretch at 1–24 (MTLTRPLALISALAALILALPADA) is a signal peptide.

It belongs to the FlgI family. In terms of assembly, the basal body constitutes a major portion of the flagellar organelle and consists of four rings (L,P,S, and M) mounted on a central rod.

The protein resides in the periplasm. It localises to the bacterial flagellum basal body. Its function is as follows. Assembles around the rod to form the L-ring and probably protects the motor/basal body from shearing forces during rotation. In Methylobacillus flagellatus (strain ATCC 51484 / DSM 6875 / VKM B-1610 / KT), this protein is Flagellar P-ring protein.